Consider the following 322-residue polypeptide: 4-hydroxythreonine-4-phosphate dehydrogenase (322 aa).

T132 contacts substrate. Residues H160, H205, and H260 each contribute to the a divalent metal cation site. K268, N277, and R286 together coordinate substrate.

This sequence belongs to the PdxA family. As to quaternary structure, homodimer. It depends on Zn(2+) as a cofactor. Requires Mg(2+) as cofactor. Co(2+) is required as a cofactor.

The protein resides in the cytoplasm. It carries out the reaction 4-(phosphooxy)-L-threonine + NAD(+) = 3-amino-2-oxopropyl phosphate + CO2 + NADH. It functions in the pathway cofactor biosynthesis; pyridoxine 5'-phosphate biosynthesis; pyridoxine 5'-phosphate from D-erythrose 4-phosphate: step 4/5. In terms of biological role, catalyzes the NAD(P)-dependent oxidation of 4-(phosphooxy)-L-threonine (HTP) into 2-amino-3-oxo-4-(phosphooxy)butyric acid which spontaneously decarboxylates to form 3-amino-2-oxopropyl phosphate (AHAP). The polypeptide is 4-hydroxythreonine-4-phosphate dehydrogenase (Xanthomonas campestris pv. campestris (strain 8004)).